A 121-amino-acid polypeptide reads, in one-letter code: Putative iron-sulfur cluster insertion protein ErpA 1 (121 aa).

3 residues coordinate iron-sulfur cluster: cysteine 49, cysteine 113, and cysteine 115.

Belongs to the HesB/IscA family. As to quaternary structure, homodimer. It depends on iron-sulfur cluster as a cofactor.

In terms of biological role, required for insertion of 4Fe-4S clusters. The polypeptide is Putative iron-sulfur cluster insertion protein ErpA 1 (Polaromonas naphthalenivorans (strain CJ2)).